A 362-amino-acid polypeptide reads, in one-letter code: Glutaminase-asparaginase (362 aa).

Residues 1–25 (MKSALKTFVPGALALLLLFPVAAQA) form the signal peptide. Positions 35–362 (ANVVILATGG…KELQRMFWEY (328 aa)) constitute an Asparaginase/glutaminase domain. The active-site Acyl-ester intermediate is Thr45. Substrate is bound by residues Ser92 and 125-126 (TD).

Belongs to the asparaginase 1 family. In terms of assembly, homotetramer.

It is found in the periplasm. It carries out the reaction L-glutamine + H2O = L-glutamate + NH4(+). The catalysed reaction is L-asparagine + H2O = L-aspartate + NH4(+). The protein is Glutaminase-asparaginase of Pseudomonas fluorescens biotype A.